The primary structure comprises 65 residues: MPKLKTRKAAAKRFKATGTGKFMRRRAFHNHLLDHKTPKQKRHLKTKAVVDRTDEERVTLMMPYA.

Belongs to the bacterial ribosomal protein bL35 family.

The protein is Large ribosomal subunit protein bL35 of Synechococcus sp. (strain CC9311).